The following is a 404-amino-acid chain: Chorismate synthase (404 aa).

2 residues coordinate NADP(+): Arg40 and Arg46. FMN contacts are provided by residues 136-138, 257-258, Gly301, 316-320, and Arg342; these read RAS, QA, and KPIST.

Belongs to the chorismate synthase family. As to quaternary structure, homotetramer. The cofactor is FMNH2.

The enzyme catalyses 5-O-(1-carboxyvinyl)-3-phosphoshikimate = chorismate + phosphate. It functions in the pathway metabolic intermediate biosynthesis; chorismate biosynthesis; chorismate from D-erythrose 4-phosphate and phosphoenolpyruvate: step 7/7. Catalyzes the anti-1,4-elimination of the C-3 phosphate and the C-6 proR hydrogen from 5-enolpyruvylshikimate-3-phosphate (EPSP) to yield chorismate, which is the branch point compound that serves as the starting substrate for the three terminal pathways of aromatic amino acid biosynthesis. This reaction introduces a second double bond into the aromatic ring system. This is Chorismate synthase from Mycolicibacterium vanbaalenii (strain DSM 7251 / JCM 13017 / BCRC 16820 / KCTC 9966 / NRRL B-24157 / PYR-1) (Mycobacterium vanbaalenii).